The chain runs to 885 residues: DNA replication licensing factor REC (885 aa).

Positions 36–76 (RVIPAGGNRQPNQGEPGAPDAPSVPPATRQPRGWSRTAGKR) are disordered. The C4-type zinc finger occupies 281–308 (CSRCQMEIAMRQRGTFQPRPYQCKRSEC). The region spanning 430 to 627 (SFKLLVQSIA…ERDMSLTAHV (198 aa)) is the MCM domain. ATP is bound at residue 473 to 480 (GDPGIGKT). Residues 796–805 (SLKEGSSRQG) are compositionally biased toward polar residues. Positions 796–818 (SLKEGSSRQGTRGGGGAGGGAGK) are disordered. Over residues 806 to 817 (TRGGGGAGGGAG) the composition is skewed to gly residues.

It belongs to the MCM family.

Its subcellular location is the nucleus. Functionally, required for meiotic DNA recombination in females. Probably not involved in DNA repair and recombination in somatic cells. The chain is DNA replication licensing factor REC (rec) from Drosophila melanogaster (Fruit fly).